The following is a 328-amino-acid chain: Transcription initiation factor IIE subunit beta (328 aa).

Residues 32-105 (QKKTNDTVIT…SSPSKKVRPG (74 aa)) form a disordered region. Serine 52 is modified (phosphoserine). A compositionally biased stretch (acidic residues) spans 85–94 (LDDDDDDEDF). Serine 97 and serine 106 each carry phosphoserine. The TFIIE beta DNA-binding region spans 113 to 187 (QANQTDISKS…FKYLSTYDVH (75 aa)).

Belongs to the TFIIE beta subunit family. In terms of assembly, TFIIE is a tetramer of two alpha (TFA1) and two beta (TFA2) subunits.

Its subcellular location is the nucleus. Recruits TFIIH to the initiation complex and stimulates the RNA polymerase II C-terminal domain kinase and DNA-dependent ATPase activities of TFIIH. Both TFIIH and TFIIE are required for promoter clearance by RNA polymerase. The sequence is that of Transcription initiation factor IIE subunit beta (TFA2) from Saccharomyces cerevisiae (strain ATCC 204508 / S288c) (Baker's yeast).